A 331-amino-acid chain; its full sequence is Lipoyl synthase (331 aa).

[4Fe-4S] cluster is bound by residues C60, C65, C71, C86, C90, C93, and S301. Positions 72 to 290 constitute a Radical SAM core domain; sequence WSRGTATFML…REEGMQLGFL (219 aa).

This sequence belongs to the radical SAM superfamily. Lipoyl synthase family. [4Fe-4S] cluster is required as a cofactor.

The protein resides in the cytoplasm. The catalysed reaction is [[Fe-S] cluster scaffold protein carrying a second [4Fe-4S](2+) cluster] + N(6)-octanoyl-L-lysyl-[protein] + 2 oxidized [2Fe-2S]-[ferredoxin] + 2 S-adenosyl-L-methionine + 4 H(+) = [[Fe-S] cluster scaffold protein] + N(6)-[(R)-dihydrolipoyl]-L-lysyl-[protein] + 4 Fe(3+) + 2 hydrogen sulfide + 2 5'-deoxyadenosine + 2 L-methionine + 2 reduced [2Fe-2S]-[ferredoxin]. It participates in protein modification; protein lipoylation via endogenous pathway; protein N(6)-(lipoyl)lysine from octanoyl-[acyl-carrier-protein]: step 2/2. In terms of biological role, catalyzes the radical-mediated insertion of two sulfur atoms into the C-6 and C-8 positions of the octanoyl moiety bound to the lipoyl domains of lipoate-dependent enzymes, thereby converting the octanoylated domains into lipoylated derivatives. The sequence is that of Lipoyl synthase from Deinococcus radiodurans (strain ATCC 13939 / DSM 20539 / JCM 16871 / CCUG 27074 / LMG 4051 / NBRC 15346 / NCIMB 9279 / VKM B-1422 / R1).